We begin with the raw amino-acid sequence, 1322 residues long: Transcription elongation factor SPT6-like (1322 aa).

The segment covering 1-17 (MNRIDEEPQIHEDPVEN) has biased composition (basic and acidic residues). Disordered stretches follow at residues 1–65 (MNRI…KKDE) and 90–113 (KRLKKSSEEEDKINNDDDDDDLSH). The span at 18 to 33 (REEDDEDEDDQYEFDD) shows a compositional bias: acidic residues. A compositionally biased stretch (basic and acidic residues) spans 48-65 (EQRHCSEKKSRSRRKKDE). Positions 97-110 (EEEDKINNDDDDDD) are enriched in acidic residues. The 72-residue stretch at 1017-1088 (GRIVQATVKK…QRYHVLLVCK (72 aa)) folds into the S1 motif domain.

Belongs to the SPT6 family.

The protein localises to the nucleus. In terms of biological role, transcription elongation factor that enhances the transcription elongation by RNA polymerase II (RNAPII). This is Transcription elongation factor SPT6-like from Arabidopsis thaliana (Mouse-ear cress).